Consider the following 86-residue polypeptide: Large ribosomal subunit protein bL27 (86 aa).

A compositionally biased stretch (gly residues) spans 1–10 (MAQKKGGGST). The interval 1–20 (MAQKKGGGSTRNGRDSESKR) is disordered.

The protein belongs to the bacterial ribosomal protein bL27 family.

This Polynucleobacter necessarius subsp. necessarius (strain STIR1) protein is Large ribosomal subunit protein bL27.